A 377-amino-acid polypeptide reads, in one-letter code: MTTPWGERVLSRFPEDPRDRLRAWDASDEYLLGHLAEREVPLSGTVVVVGDRWGALVTALAPHRPVQITDSHLAREATRVNLERSGVEPGSVRLLTTQDPPPDRVDVLLVRVPKSLALLEDQLLRLAPALHEGTVVVGTGMVKEIHTSTLRLFERIVGPTRTSLAVKKARLIFAEPDPALKRPANPWPLGYRLPDDVGRLSGRPVVNHAGVFCADRLDIGTRFFLRHLPAPGRFRRVVDLGCGNGVVGTAVSLADPDAELLFTDESFQAVASARATYRANEVAGQAEFRVGDGLAGVPDGSVDLVLNNPPFHSHQATTGATAWRMFTGARRVLRPGGELWVVGNRHLGYHVRLRRLFGNSELVAGDRKFVVLKAVKE.

It belongs to the methyltransferase superfamily. RlmG family.

The protein localises to the cytoplasm. It carries out the reaction guanosine(1835) in 23S rRNA + S-adenosyl-L-methionine = N(2)-methylguanosine(1835) in 23S rRNA + S-adenosyl-L-homocysteine + H(+). Functionally, specifically methylates the guanine in position 1835 (m2G1835) of 23S rRNA. The sequence is that of Ribosomal RNA large subunit methyltransferase G from Streptomyces coelicolor (strain ATCC BAA-471 / A3(2) / M145).